A 623-amino-acid polypeptide reads, in one-letter code: Phosphoglucomutase, chloroplastic (623 aa).

A chloroplast-targeting transit peptide spans 1–63; it reads MTSTYTRFDT…SSSSSSVVAG (63 aa). 2 residues coordinate alpha-D-glucose 1,6-bisphosphate: R88 and S181. Residue S181 is the Phosphoserine intermediate of the active site. Residues S181, D346, D348, and D350 each coordinate Mg(2+). S181 carries the post-translational modification Phosphoserine. Positions 350, 351, 414, 433, 435, and 446 each coordinate alpha-D-glucose 1,6-bisphosphate.

The protein belongs to the phosphohexose mutase family. In terms of assembly, monomer. The cofactor is Mg(2+). Expressed in flowers, siliques and germinating seeds.

It localises to the plastid. Its subcellular location is the chloroplast. It catalyses the reaction alpha-D-glucose 1-phosphate = alpha-D-glucose 6-phosphate. The enzyme catalyses O-phospho-L-seryl-[protein] + alpha-D-glucose 1-phosphate = alpha-D-glucose 1,6-bisphosphate + L-seryl-[protein]. The catalysed reaction is alpha-D-glucose 1,6-bisphosphate + L-seryl-[protein] = O-phospho-L-seryl-[protein] + alpha-D-glucose 6-phosphate. Inhibited by the Calvin cycle intermediates fructose-1,6-bisphosphate and ribulose-1,5-bisphosphate. Functionally, catalyzes the reversible isomerization of alpha-D-glucose 1-phosphate to alpha-D-glucose 6-phosphate. The mechanism proceeds via the intermediate compound alpha-D-glucose 1,6-bisphosphate. This enzyme participates in both the breakdown and synthesis of glucose. Factor that affects seed oil content. Accumulated starch in young embryos may play an important role in providing carbon resources for seed storage lipid biosynthesis in oilseed plants. Promotes gravitropic responses, negative in shoots but positive in roots, by facilitating starch granules (statoliths) formation in hypocotyls and roots columella. This chain is Phosphoglucomutase, chloroplastic, found in Arabidopsis thaliana (Mouse-ear cress).